The sequence spans 270 residues: Tetraspanin-2 (270 aa).

Residues 1–8 (MALANNLT) lie on the Cytoplasmic side of the membrane. The chain crosses the membrane as a helical span at residues 9–29 (AILNLLALLCSIPITASGIWL). Topologically, residues 30–42 (ASKPDNECVNLLR) are extracellular. A helical transmembrane segment spans residues 43–63 (WPVVVLGVLILVVSATGFIGA). Topologically, residues 64–74 (YKYKETLLAVY) are cytoplasmic. A helical transmembrane segment spans residues 75 to 95 (LCCMAILIGLLLVVLIFAFVV). Residues 96-232 (TRPDGSYRVP…NLRKEWRKAN (137 aa)) lie on the Extracellular side of the membrane. Residues 233–253 (LILIITVVVLIWVYVIACSAF) traverse the membrane as a helical segment. The Cytoplasmic segment spans residues 254 to 270 (RNAQTEDLFRKYKQGWV).

It belongs to the tetraspanin (TM4SF) family.

Its subcellular location is the membrane. In terms of biological role, may be involved in the regulation of cell differentiation. This Arabidopsis thaliana (Mouse-ear cress) protein is Tetraspanin-2 (TET2).